The chain runs to 318 residues: Electron transfer flavoprotein subunit alpha (318 aa).

257–285 is an FAD binding site; the sequence is LYIALGISGAIQHRAGMQTSKTIVAVNKD.

It belongs to the ETF alpha-subunit/FixB family. As to quaternary structure, heterodimer of an alpha and a beta subunit. Requires FAD as cofactor.

Its function is as follows. The electron transfer flavoprotein serves as a specific electron acceptor for other dehydrogenases. It transfers the electrons to the main respiratory chain via ETF-ubiquinone oxidoreductase (ETF dehydrogenase). The polypeptide is Electron transfer flavoprotein subunit alpha (etfA) (Mycobacterium leprae (strain TN)).